The sequence spans 79 residues: Putative membrane protein insertion efficiency factor (79 aa).

Belongs to the UPF0161 family.

It localises to the cell inner membrane. Functionally, could be involved in insertion of integral membrane proteins into the membrane. The protein is Putative membrane protein insertion efficiency factor of Prochlorococcus marinus (strain NATL1A).